The sequence spans 81 residues: MSHSVKIYDTCIGCTQCVRACPLDVLEMVPWDGCKAGQIASSPRTEDCIGCKRCETACPTDFLSVRVYLGAETTRSMGLAY.

4Fe-4S ferredoxin-type domains lie at Ser2–Trp31 and Gly37–Tyr68. [4Fe-4S] cluster contacts are provided by Cys11, Cys14, Cys17, Cys21, Cys48, Cys51, Cys54, and Cys58.

As to quaternary structure, the cyanobacterial PSI reaction center is composed of one copy each of PsaA,B,C,D,E,F,I,J,K,L,M and X, and forms trimeric complexes. [4Fe-4S] cluster is required as a cofactor.

It localises to the cellular thylakoid membrane. It catalyses the reaction reduced [plastocyanin] + hnu + oxidized [2Fe-2S]-[ferredoxin] = oxidized [plastocyanin] + reduced [2Fe-2S]-[ferredoxin]. Apoprotein for the two 4Fe-4S centers FA and FB of photosystem I (PSI); essential for photochemical activity. FB is the terminal electron acceptor of PSI, donating electrons to ferredoxin. The C-terminus interacts with PsaA/B/D and helps assemble the protein into the PSI complex. Required for binding of PsaD and PsaE to PSI. PSI is a plastocyanin/cytochrome c6-ferredoxin oxidoreductase, converting photonic excitation into a charge separation, which transfers an electron from the donor P700 chlorophyll pair to the spectroscopically characterized acceptors A0, A1, FX, FA and FB in turn. In Trichodesmium erythraeum (strain IMS101), this protein is Photosystem I iron-sulfur center.